The sequence spans 1357 residues: DNA-directed RNA polymerase subunit beta (1357 aa).

It belongs to the RNA polymerase beta chain family. As to quaternary structure, the RNAP catalytic core consists of 2 alpha, 1 beta, 1 beta' and 1 omega subunit. When a sigma factor is associated with the core the holoenzyme is formed, which can initiate transcription.

The catalysed reaction is RNA(n) + a ribonucleoside 5'-triphosphate = RNA(n+1) + diphosphate. DNA-dependent RNA polymerase catalyzes the transcription of DNA into RNA using the four ribonucleoside triphosphates as substrates. In Pseudomonas aeruginosa (strain LESB58), this protein is DNA-directed RNA polymerase subunit beta.